A 1059-amino-acid chain; its full sequence is IQ motif-containing protein H (1059 aa).

Positions 6–35 form a coiled coil; that stretch reads KNKDEVGNILVKVQDDLRQLKKNIVQFTVQ. The segment at 245–267 is disordered; it reads MESAESRLLRAPPPSAASASSDN. One can recognise an IQ domain in the interval 401–430; it reads HQAAAVRIQTCWRRYSARTAYLIRLRSKWA.

The sequence is that of IQ motif-containing protein H (iqch) from Danio rerio (Zebrafish).